Reading from the N-terminus, the 289-residue chain is Nucleotide-binding protein COPRO5265_0725 (289 aa).

9-16 is a binding site for ATP; sequence GLSGAGKS. 59–62 contacts GTP; it reads DSRS.

The protein belongs to the RapZ-like family.

Displays ATPase and GTPase activities. This Coprothermobacter proteolyticus (strain ATCC 35245 / DSM 5265 / OCM 4 / BT) protein is Nucleotide-binding protein COPRO5265_0725.